A 148-amino-acid chain; its full sequence is Snaclec crotocetin (148 aa).

Residues 1–23 form the signal peptide; that stretch reads MGRLVFVSFGLLVVFLSLTGTGA. 3 disulfide bridges follow: cysteine 27-cysteine 38, cysteine 55-cysteine 144, and cysteine 121-cysteine 136. Residues 34–145 form the C-type lectin domain; that stretch reads YEGHCYKVFK…CSKTHKVVCK (112 aa).

Belongs to the snaclec family. In terms of assembly, heterodimer; disulfide-linked. In terms of tissue distribution, expressed by the venom gland.

The protein localises to the secreted. In terms of biological role, interferes with one step of hemostasis (modulation of platelet aggregation, or coagulation cascade, for example). In Crotalus durissus terrificus (South American rattlesnake), this protein is Snaclec crotocetin.